A 492-amino-acid polypeptide reads, in one-letter code: Tumor necrosis factor receptor superfamily member 8 (492 aa).

The signal sequence occupies residues 1 to 18 (MSILLKAAGLLFLGMLQA). Topologically, residues 19–282 (FPKDRPLDTT…STGTPFLDPG (264 aa)) are extracellular. 2 TNFR-Cys repeats span residues 57 to 104 (PCPQ…PRIC) and 105 to 141 (ECQPGMYCSTPAVNSCARCSEKTVVKFPDTAEKNTIC). Disulfide bonds link C58–C80, C83–C96, C86–C104, and C123–C141. Positions 141–178 (CDLPSPGSGPNGSNPDDCKTLTSHTTPQAIPTLESPAN) are disordered. Residues 144–155 (PSPGSGPNGSNP) show a composition bias toward low complexity. N-linked (GlcNAc...) asparagine glycosylation is found at N151, N178, and N224. The segment covering 160–178 (TLTSHTTPQAIPTLESPAN) has biased composition (polar residues). A helical transmembrane segment spans residues 283 to 303 (SMLFWVAMVVLLVGSASFLLC). The Cytoplasmic portion of the chain corresponds to 304-492 (YWKACRRRFQ…DHEPTTVSEK (189 aa)). Phosphoserine occurs at positions 334 and 348. 2 disordered regions span residues 336–366 (PTEKLTQLQRSGSVTDSSAGHTLSPLSPPAV) and 432–492 (PEGR…VSEK). Residues 339–360 (KLTQLQRSGSVTDSSAGHTLSP) show a composition bias toward polar residues. Basic and acidic residues-rich tracts occupy residues 450–459 (EVDHTPHYPE) and 478–492 (EGGKEDHEPTTVSEK).

The protein belongs to the TNFR8 family. As to quaternary structure, interacts with TRAF1, TRAF2, TRAF3 and TRAF5. As to expression, very low level of expression. Detected in spleen, thymus and lung. Highly expressed in HTLV-1 infected T-cell lines.

Its subcellular location is the cell membrane. Its function is as follows. Receptor for TNFSF8/CD30L. May play a role in the regulation of cellular growth and transformation of activated lymphoblasts. Regulates gene expression through activation of NF-kappa-B. The chain is Tumor necrosis factor receptor superfamily member 8 from Rattus norvegicus (Rat).